A 477-amino-acid polypeptide reads, in one-letter code: MQVLHVCSEMFPLLKTGGLADVIGALPAAQIADGVDARVLLPAFPDIRRGVTDAQVVSRRDTFAGHITLLFGHYNGVGIYLIDAPHLYDRPGSPYHDTNLFAYTDNVLRFALLGWVGAEMASGLDPFWRPDVVHAHDWHAGLAPAYLAARGRPAKSVFTVHNLAYQGMFYAHHMNDIQLPWSFFNIHGLEFNGQISFLKAGLYYADHITAVSPTYAREITEPQFAYGMEGLLQQRHREGRLSGVLNGVDEKIWSPETDLLLASRYTRDTLEDKAENKRQLQIAMGLKVDDKVPLFAVVSRLTSQKGLDLVLEALPGLLEQGGQLALLGAGDPVLQEGFLAAAAEYPGQVGVQIGYHEAFSHRIMGGADVILVPSRFEPCGLTQLYGLKYGTLPLVRRTGGLADTVSDCSLENLADGVASGFVFEDNNAWSLLRAIRRAFVLWSRPSLWRFVQRQAMAMDFSWQVAAKSYRELYYRLK.

Lys-15 serves as a coordination point for ADP-alpha-D-glucose.

This sequence belongs to the glycosyltransferase 1 family. Bacterial/plant glycogen synthase subfamily.

The catalysed reaction is [(1-&gt;4)-alpha-D-glucosyl](n) + ADP-alpha-D-glucose = [(1-&gt;4)-alpha-D-glucosyl](n+1) + ADP + H(+). Its pathway is glycan biosynthesis; glycogen biosynthesis. Synthesizes alpha-1,4-glucan chains using ADP-glucose. The protein is Glycogen synthase of Shigella sonnei (strain Ss046).